Here is a 396-residue protein sequence, read N- to C-terminus: Aldo-keto reductase ausK (396 aa).

Residue Asp76 coordinates NADP(+). The active-site Proton donor is Tyr81. His156 is a substrate binding site. NADP(+)-binding positions include 186–187 (CN), Gln212, 241–251 (DALGSGKFQSR), and 317–325 (RKIQHLHDN).

The protein belongs to the aldo/keto reductase family. Aldo/keto reductase 2 subfamily. Homodimer.

It functions in the pathway secondary metabolite biosynthesis; terpenoid biosynthesis. Its function is as follows. Aldo-keto reductase; part of the gene cluster that mediates the biosynthesis of calidodehydroaustin, a fungal meroterpenoid. The first step of the pathway is the synthesis of 3,5-dimethylorsellinic acid by the polyketide synthase ausA. 3,5-dimethylorsellinic acid is then prenylated by the polyprenyl transferase ausN. Further epoxidation by the FAD-dependent monooxygenase ausM and cyclization by the probable terpene cyclase ausL lead to the formation of protoaustinoid A. Protoaustinoid A is then oxidized to spiro-lactone preaustinoid A3 by the combined action of the FAD-binding monooxygenases ausB and ausC, and the dioxygenase ausE. Acid-catalyzed keto-rearrangement and ring contraction of the tetraketide portion of preaustinoid A3 by ausJ lead to the formation of preaustinoid A4. The aldo-keto reductase ausK, with the help of ausH, is involved in the next step by transforming preaustinoid A4 into isoaustinone which is in turn hydroxylated by the P450 monooxygenase ausI to form austinolide. The cytochrome P450 monooxygenase ausG modifies austinolide to austinol. Austinol is further acetylated to austin by the O-acetyltransferase ausP, which spontaneously changes to dehydroaustin. The cytochrome P450 monooxygenase ausR then converts dehydroaustin is into 7-dehydrodehydroaustin. The hydroxylation catalyzed by ausR permits the O-acetyltransferase ausQ to add an additional acetyl group to the molecule, leading to the formation of acetoxydehydroaustin. The short chain dehydrogenase ausT catalyzes the reduction of the double bond present between carbon atoms 1 and 2 to convert 7-dehydrodehydroaustin into 1,2-dihydro-7-hydroxydehydroaustin. AusQ catalyzes not only an acetylation reaction but also the addition of the PKS ausV diketide product to 1,2-dihydro-7-hydroxydehydroaustin, forming precalidodehydroaustin. Finally, the iron/alpha-ketoglutarate-dependent dioxygenase converts precalidodehydroaustin into calidodehydroaustin. In Aspergillus calidoustus, this protein is Aldo-keto reductase ausK.